Here is a 465-residue protein sequence, read N- to C-terminus: uncharacterized protein (465 aa).

The RAMA domain maps to asparagine 6 to arginine 91. Disordered regions lie at residues threonine 95 to glutamine 377 and tyrosine 392 to serine 465. The span at proline 117–proline 137 shows a compositional bias: low complexity. Acidic residues predominate over residues glutamate 156–alanine 169. A compositionally biased stretch (low complexity) spans threonine 177–threonine 190. The span at proline 208–leucine 220 shows a compositional bias: basic and acidic residues. Residues glutamate 214–serine 242 are a coiled coil. Residues glutamine 226–serine 263 show a composition bias toward low complexity. Positions asparagine 264–tyrosine 294 are enriched in polar residues. The span at asparagine 295 to asparagine 376 shows a compositional bias: low complexity. Positions tyrosine 392–leucine 407 are enriched in polar residues. The span at asparagine 424 to lysine 442 shows a compositional bias: low complexity. Basic residues predominate over residues serine 443 to serine 465.

This is an uncharacterized protein from Dictyostelium discoideum (Social amoeba).